Reading from the N-terminus, the 80-residue chain is RNA-binding protein Hfq (80 aa).

Residues 10–70 (DLFLNTVRKQ…ISTIMPGQPM (61 aa)) form the Sm domain.

This sequence belongs to the Hfq family. In terms of assembly, homohexamer.

Functionally, RNA chaperone that binds small regulatory RNA (sRNAs) and mRNAs to facilitate mRNA translational regulation in response to envelope stress, environmental stress and changes in metabolite concentrations. Also binds with high specificity to tRNAs. The protein is RNA-binding protein Hfq of Rhizobium etli (strain CIAT 652).